The primary structure comprises 603 residues: Zyxin (603 aa).

Pro residues predominate over residues 1 to 13 (MGPPPPPPPPPLL). Disordered regions lie at residues 1 to 131 (MGPP…HRDP), 166 to 193 (TQYANKSPSPPSFGNSNSEATYVSPYSS), 218 to 237 (ATTTTSSNSLNENNNSNKYG), 310 to 333 (RDEGLTESQKAANRNQTGALSASS), and 363 to 395 (LNQPADTSPSIVQYPRRQAPDSSRANYSATTST). Residues 69-95 (VRGDVENLSDGRLDRPHQQLPDGDRTY) are compositionally biased toward basic and acidic residues. Positions 184–193 (EATYVSPYSS) are enriched in polar residues. Residues 218 to 234 (ATTTTSSNSLNENNNSN) are compositionally biased toward low complexity. 3 stretches are compositionally biased toward polar residues: residues 315 to 333 (TESQKAANRNQTGALSASS), 363 to 373 (LNQPADTSPSI), and 382 to 391 (PDSSRANYSA). LIM zinc-binding domains follow at residues 409-470 (NICV…SLEK), 471-529 (CTAC…KFAP), and 530-601 (RCAL…RVVS).

The protein belongs to the zyxin/ajuba family. Interacts with dyc-1. Interacts with glh-1 and glh-3. As to expression, expressed in neurons and body wall muscle. Expressed in pharyngeal, enteric and uterine muscles and in spermatheca.

Its subcellular location is the nucleus. The protein localises to the cytoplasm. It localises to the myofibril. It is found in the sarcomere. The protein resides in the m line. Its subcellular location is the cell projection. The protein localises to the axon. It localises to the cell junction. It is found in the focal adhesion. The protein resides in the cytoskeleton. Functionally, functions both as a mechanical stabilizer (via LIM domains) of focal adhesions, and as a sensor component for muscle cell damage (via N-terminus). Regulates, stabilizes and maintains posterior lateral mechanosensory (PLM) synaptic branch extension and new synapse formation and growth during larval development. In Caenorhabditis elegans, this protein is Zyxin.